We begin with the raw amino-acid sequence, 498 residues long: MRLNPTASSPGDSTLQKKKLGRIVQIIGPVLDVAFPRGKMPYIYNALVVQGRDTVGQQIHVTCEVQQLLGNNRVRAVAMSATDGLMRGMEVIDTGAPLSVPVGGATLGRIFNVLGEPVDNLGPVDNRTTSPIHKSPPAFIELDTKLSIFETGIKVVDLLAPYRRGGKIGLFGGAGVGKTVLIMELINNIAKAHGGVSVFGGVGERTREGNDLYMEMKESGVINEQKVAESKVALVYGQMNEPPGARMRVGLTALTMAEYFRDVNKQDVLLFIDNIFRFVQAGSEVSALLGRMPSAVGYQPTLSTEMGSLQERITSTKKGSITSIQAVYVPADDLTDPAPATTFAHLDATTVLSRGLAAKGIYPAVDPLDSTSTMLQPRIVGNEHYEIAQRVKQTLQRYKELQDIIAILGLDELSEEDRLTVARARKIERFLSQPFFVAEVFTGSTGKYVGLSETIRGFHLILSGEFDGLPEQAFYLVGNIDEATAKAMKLEKESNLKK.

Position 172 to 179 (172 to 179 (GGAGVGKT)) interacts with ATP.

The protein belongs to the ATPase alpha/beta chains family. In terms of assembly, F-type ATPases have 2 components, CF(1) - the catalytic core - and CF(0) - the membrane proton channel. CF(1) has five subunits: alpha(3), beta(3), gamma(1), delta(1), epsilon(1). CF(0) has four main subunits: a(1), b(1), b'(1) and c(9-12).

Its subcellular location is the plastid. The protein localises to the chloroplast thylakoid membrane. It catalyses the reaction ATP + H2O + 4 H(+)(in) = ADP + phosphate + 5 H(+)(out). Produces ATP from ADP in the presence of a proton gradient across the membrane. The catalytic sites are hosted primarily by the beta subunits. In Pelargonium hortorum (Common geranium), this protein is ATP synthase subunit beta, chloroplastic.